The sequence spans 1002 residues: MSEEEKIRIICNTNNEHRILKYEKDESNTRIITSIILHEIEDKSLIPAIDEMMENEVNAEIKTSISEFFDLVSNAFVAHYDEIVRKNNENANQNITDQNEIIEIKTQIPGLEKLHVRKVKFDQLMKIYSLNEEVAKKFPLLDVINGKFTVEQLKEGGLFDMTNVLPVLAEIFVITLSLGTVYGGAVFFILNWYTNYESYALILLQILHAIIQAIKRHVKPQKELISYVNKVKNFEAGQVEIIDPFFVFNKVNEKFEISKYRIEAVTHTNKPSIAKPLNEAFQQLINNIKVVKKISKPIKYIGYVKGFTNDTVIGMKGKKLPNIKRNVVGVYLDEKSSTLWVSHPLLCDAFELLHERNIGDGKKMSLDEIGKIPDDLVIFEIYDDEKLNSLILPFMESVDLKTNHQVSYGYKTKTNEQAHYKFVSEYGNMNFNDPIFSIFFPNHFIKVSYDVGIDVSVCELAGYNEMDTFTKLVTQQIESTASQMNLHEALNVIHNSHLDCGCYDNFGIFLNEYFTTGEVLEHIKETKVKPSDYHLNKMYVDMFTKRRPTELQHLLDKESKCMNLAYNPAFFDAEFDLVGDKNDHTLVVKFPRRKPYYRFLDENHGDASTLSLYEMVISCKNGKVSNATKVGFNVMSKSILPNPLLKKGGRGSPNVDKTRYFEYDLVFVTFSGDITQYLINDWIGENLSVYDESHSGVDLFKRSSVFQNGCFVKSADLHNEGLIELLRQPQNKLNLFMEGIVGAMCTDMEMPSFKSKMLQGIEALQCKKDNEVLVSGTSSSNQAYSFRNYIRSTRSGDVITRFERCIKIKSELHSPQKMCDNTDWFEFGRLGHLSFGTNLSEVIRSKHELLTSHPCGVRFRSFGYFRFGKSFKCKTCRNSYQNLFRFFHVWIGATIIQRVKSVSLVEVLSNLELNFMKLSQEHNKCSQYQFDLYDEHILNRILESKQDIIDVLLTSNDYNRLLNVISQIRISASELQHINGISKANLVIKIHLLSVIRSVCVD.

This is an uncharacterized protein from Fiji disease virus (isolate Sugarcane) (FDV).